Reading from the N-terminus, the 33-residue chain is Mytimycin (33 aa).

The protein localises to the secreted. Has antifungal activity against N.crassa and F.culmorum. This chain is Mytimycin, found in Mytilus edulis (Blue mussel).